Here is a 159-residue protein sequence, read N- to C-terminus: Ribosome maturation factor RimP (159 aa).

This sequence belongs to the RimP family.

The protein resides in the cytoplasm. Required for maturation of 30S ribosomal subunits. This is Ribosome maturation factor RimP from Streptococcus pneumoniae serotype 2 (strain D39 / NCTC 7466).